Here is a 431-residue protein sequence, read N- to C-terminus: Histidine--tRNA ligase (431 aa).

Belongs to the class-II aminoacyl-tRNA synthetase family. As to quaternary structure, homodimer.

The protein resides in the cytoplasm. The enzyme catalyses tRNA(His) + L-histidine + ATP = L-histidyl-tRNA(His) + AMP + diphosphate + H(+). This Neisseria meningitidis serogroup C (strain 053442) protein is Histidine--tRNA ligase.